The sequence spans 219 residues: 2-hydroxy-3-keto-5-methylthiopentenyl-1-phosphate phosphatase (219 aa).

This sequence belongs to the HAD-like hydrolase superfamily. MtnX family.

The enzyme catalyses 2-hydroxy-5-methylsulfanyl-3-oxopent-1-enyl phosphate + H2O = 1,2-dihydroxy-5-(methylsulfanyl)pent-1-en-3-one + phosphate. It participates in amino-acid biosynthesis; L-methionine biosynthesis via salvage pathway; L-methionine from S-methyl-5-thio-alpha-D-ribose 1-phosphate: step 4/6. In terms of biological role, dephosphorylates 2-hydroxy-3-keto-5-methylthiopentenyl-1-phosphate (HK-MTPenyl-1-P) yielding 1,2-dihydroxy-3-keto-5-methylthiopentene (DHK-MTPene). The protein is 2-hydroxy-3-keto-5-methylthiopentenyl-1-phosphate phosphatase of Bacillus thuringiensis (strain Al Hakam).